We begin with the raw amino-acid sequence, 720 residues long: Engulfment and cell motility protein 3 (720 aa).

One can recognise an ELMO domain in the interval 307 to 479; the sequence is EQRDQLQALR…VVREQLARTL (173 aa). The region spanning 542-664 is the PH domain; the sequence is RLCEGMLFRK…TDGLSALLGS (123 aa). The short motif at 696–706 is the SH3-binding element; the sequence is PEQPPPVPPPP.

Probably interacts directly with the SH3-domain of DOCK1 via its SH3-binding site. Part of a complex with DOCK1 and RAC1. Interacts with ADGRB3.

It is found in the cytoplasm. Functionally, involved in cytoskeletal rearrangements required for phagocytosis of apoptotic cells and cell motility. Acts in association with DOCK1 and CRK. Was initially proposed to be required in complex with DOCK1 to activate Rac Rho small GTPases. May enhance the guanine nucleotide exchange factor (GEF) activity of DOCK1. The sequence is that of Engulfment and cell motility protein 3 (Elmo3) from Mus musculus (Mouse).